A 706-amino-acid chain; its full sequence is Ribosomal RNA large subunit methyltransferase K/L (706 aa).

The THUMP domain occupies 43–154 (LMYQSLLWSR…RDMASVALDL (112 aa)).

Belongs to the methyltransferase superfamily. RlmKL family.

It localises to the cytoplasm. It carries out the reaction guanosine(2445) in 23S rRNA + S-adenosyl-L-methionine = N(2)-methylguanosine(2445) in 23S rRNA + S-adenosyl-L-homocysteine + H(+). It catalyses the reaction guanosine(2069) in 23S rRNA + S-adenosyl-L-methionine = N(2)-methylguanosine(2069) in 23S rRNA + S-adenosyl-L-homocysteine + H(+). Specifically methylates the guanine in position 2445 (m2G2445) and the guanine in position 2069 (m7G2069) of 23S rRNA. This Yersinia pseudotuberculosis serotype O:1b (strain IP 31758) protein is Ribosomal RNA large subunit methyltransferase K/L.